The primary structure comprises 223 residues: Deoxyribose-phosphate aldolase (223 aa).

Catalysis depends on Asp91, which acts as the Proton donor/acceptor. Lys153 functions as the Schiff-base intermediate with acetaldehyde in the catalytic mechanism. The active-site Proton donor/acceptor is Lys182.

It belongs to the DeoC/FbaB aldolase family. DeoC type 1 subfamily.

It localises to the cytoplasm. The enzyme catalyses 2-deoxy-D-ribose 5-phosphate = D-glyceraldehyde 3-phosphate + acetaldehyde. It participates in carbohydrate degradation; 2-deoxy-D-ribose 1-phosphate degradation; D-glyceraldehyde 3-phosphate and acetaldehyde from 2-deoxy-alpha-D-ribose 1-phosphate: step 2/2. Functionally, catalyzes a reversible aldol reaction between acetaldehyde and D-glyceraldehyde 3-phosphate to generate 2-deoxy-D-ribose 5-phosphate. In Streptococcus pyogenes serotype M4 (strain MGAS10750), this protein is Deoxyribose-phosphate aldolase.